The primary structure comprises 114 residues: Ribosome-binding factor A (114 aa).

It belongs to the RbfA family. In terms of assembly, monomer. Binds 30S ribosomal subunits, but not 50S ribosomal subunits or 70S ribosomes.

Its subcellular location is the cytoplasm. Its function is as follows. One of several proteins that assist in the late maturation steps of the functional core of the 30S ribosomal subunit. Associates with free 30S ribosomal subunits (but not with 30S subunits that are part of 70S ribosomes or polysomes). Required for efficient processing of 16S rRNA. May interact with the 5'-terminal helix region of 16S rRNA. This is Ribosome-binding factor A from Listeria monocytogenes serotype 4b (strain F2365).